Reading from the N-terminus, the 316-residue chain is MLP-like protein 34 (316 aa).

Belongs to the MLP family.

In Arabidopsis thaliana (Mouse-ear cress), this protein is MLP-like protein 34 (MLP34).